Here is a 184-residue protein sequence, read N- to C-terminus: MKSENNLIWIDLEMTGLDHKADQIIEIATVVTDAELNVLAEGPVMAIQTEQHYLDGMDAWCTTHHGNSGLTKRVQESTITMAQAEQETIKFLKPYVPKGKSPMCGNSICQDRRFLIEQMPELEQFFHYRNLDVSSLKELARRWAPTVYSGYKKKGAHLALDDIYESIEELKYYRQNLFLPEFQQ.

Positions 7-170 constitute an Exonuclease domain; it reads LIWIDLEMTG…DDIYESIEEL (164 aa). Residue Tyr-128 is part of the active site.

This sequence belongs to the oligoribonuclease family.

It localises to the cytoplasm. Functionally, 3'-to-5' exoribonuclease specific for small oligoribonucleotides. This chain is Oligoribonuclease, found in Hydrogenovibrio crunogenus (strain DSM 25203 / XCL-2) (Thiomicrospira crunogena).